The sequence spans 263 residues: Small ribosomal subunit protein eS4 (263 aa).

In terms of domain architecture, S4 RNA-binding spans 42 to 104; sequence LPLIIFLRNR…TGEHFRLVYD (63 aa).

It belongs to the eukaryotic ribosomal protein eS4 family. As to quaternary structure, component of the small ribosomal subunit.

The protein localises to the cytoplasm. In terms of biological role, component of the small ribosomal subunit. The ribosome is a large ribonucleoprotein complex responsible for the synthesis of proteins in the cell. The chain is Small ribosomal subunit protein eS4 (rps4) from Xenopus tropicalis (Western clawed frog).